The following is a 180-amino-acid chain: Adenine phosphoribosyltransferase (180 aa).

Alanine 2 bears the N-acetylalanine mark. A phosphoserine mark is found at serine 15 and serine 30. A Phosphotyrosine modification is found at tyrosine 60. Serine 66 is subject to Phosphoserine. Lysine 114 is subject to N6-acetyllysine. At threonine 135 the chain carries Phosphothreonine.

This sequence belongs to the purine/pyrimidine phosphoribosyltransferase family. Homodimer.

It localises to the cytoplasm. It carries out the reaction AMP + diphosphate = 5-phospho-alpha-D-ribose 1-diphosphate + adenine. Its pathway is purine metabolism; AMP biosynthesis via salvage pathway; AMP from adenine: step 1/1. Catalyzes a salvage reaction resulting in the formation of AMP, that is energically less costly than de novo synthesis. The polypeptide is Adenine phosphoribosyltransferase (Dipodillus campestris (North African gerbil)).